The primary structure comprises 128 residues: Ferric uptake regulation protein homolog (128 aa).

This sequence belongs to the Fur family.

The sequence is that of Ferric uptake regulation protein homolog from Archaeoglobus fulgidus (strain ATCC 49558 / DSM 4304 / JCM 9628 / NBRC 100126 / VC-16).